The chain runs to 282 residues: Bifunctional protein FolD 2 (282 aa).

NADP(+) contacts are provided by residues 165 to 167 and Ser190; that span reads GRS.

The protein belongs to the tetrahydrofolate dehydrogenase/cyclohydrolase family. As to quaternary structure, homodimer.

It carries out the reaction (6R)-5,10-methylene-5,6,7,8-tetrahydrofolate + NADP(+) = (6R)-5,10-methenyltetrahydrofolate + NADPH. It catalyses the reaction (6R)-5,10-methenyltetrahydrofolate + H2O = (6R)-10-formyltetrahydrofolate + H(+). The protein operates within one-carbon metabolism; tetrahydrofolate interconversion. In terms of biological role, catalyzes the oxidation of 5,10-methylenetetrahydrofolate to 5,10-methenyltetrahydrofolate and then the hydrolysis of 5,10-methenyltetrahydrofolate to 10-formyltetrahydrofolate. The protein is Bifunctional protein FolD 2 of Acinetobacter baylyi (strain ATCC 33305 / BD413 / ADP1).